Here is a 467-residue protein sequence, read N- to C-terminus: Argininosuccinate lyase (467 aa).

Belongs to the lyase 1 family. Argininosuccinate lyase subfamily.

Its subcellular location is the cytoplasm. The enzyme catalyses 2-(N(omega)-L-arginino)succinate = fumarate + L-arginine. It functions in the pathway amino-acid biosynthesis; L-arginine biosynthesis; L-arginine from L-ornithine and carbamoyl phosphate: step 3/3. The sequence is that of Argininosuccinate lyase from Methylibium petroleiphilum (strain ATCC BAA-1232 / LMG 22953 / PM1).